Consider the following 526-residue polypeptide: Peptide chain release factor 3 (526 aa).

In terms of domain architecture, tr-type G spans 9–277; that stretch reads DKRRTFAIIS…GIVEWAPKPL (269 aa). GTP is bound by residues 18–25, 86–90, and 140–143; these read SHPDAGKT, DTPGH, and NKLD.

This sequence belongs to the TRAFAC class translation factor GTPase superfamily. Classic translation factor GTPase family. PrfC subfamily.

The protein resides in the cytoplasm. Increases the formation of ribosomal termination complexes and stimulates activities of RF-1 and RF-2. It binds guanine nucleotides and has strong preference for UGA stop codons. It may interact directly with the ribosome. The stimulation of RF-1 and RF-2 is significantly reduced by GTP and GDP, but not by GMP. The sequence is that of Peptide chain release factor 3 from Shewanella sp. (strain MR-4).